Consider the following 205-residue polypeptide: Superoxide dismutase [Mn] (205 aa).

Histidine 30, histidine 78, aspartate 166, and histidine 170 together coordinate Mn(2+).

The protein belongs to the iron/manganese superoxide dismutase family. Homodimer. Requires Mn(2+) as cofactor.

It carries out the reaction 2 superoxide + 2 H(+) = H2O2 + O2. Destroys superoxide anion radicals which are normally produced within the cells and which are toxic to biological systems. This chain is Superoxide dismutase [Mn] (sodA), found in Chlamydia muridarum (strain MoPn / Nigg).